A 709-amino-acid chain; its full sequence is Nicastrin (709 aa).

The signal sequence occupies residues 1 to 33; sequence MATAGGGSGADPGSRGLLRLLSFCVLLAGLCRG. Over 34-669 the chain is Extracellular; it reads NSVERKIYIP…IFLIASKELE (636 aa). Residues asparagine 45 and asparagine 55 are each glycosylated (N-linked (GlcNAc...) asparagine). Cystine bridges form between cysteine 50/cysteine 62 and cysteine 140/cysteine 159. N-linked (GlcNAc...) asparagine glycans are attached at residues asparagine 187, asparagine 200, and asparagine 204. 2 disulfides stabilise this stretch: cysteine 195–cysteine 213 and cysteine 230–cysteine 248. N-linked (GlcNAc...) asparagine glycans are attached at residues asparagine 264, asparagine 387, asparagine 417, asparagine 435, asparagine 464, asparagine 506, asparagine 530, asparagine 562, asparagine 573, asparagine 580, and asparagine 612. Cysteine 586 and cysteine 620 form a disulfide bridge. A helical membrane pass occupies residues 670–690; it reads LITLTVGFGILIFSLIVTYCI. Over 691–709 the chain is Cytoplasmic; it reads NAKADVLFIAPREPGAVSY.

This sequence belongs to the nicastrin family. In terms of assembly, component of the gamma-secretase complex. The functional gamma-secretase complex is composed of at least four polypeptides: a presenilin homodimer (PSEN1 or PSEN2), nicastrin (NCSTN), APH1 (APH1A or APH1B) and PSENEN/PEN2. Binds to proteolytic processed C-terminal fragments C83 and C99 of the amyloid precursor protein (APP). Interacts with PSEN1 and PSEN2. In terms of processing, N-glycosylated. Detected in brain (at protein level). Widely expressed.

It is found in the membrane. The protein resides in the cytoplasmic vesicle membrane. It localises to the melanosome. Its function is as follows. Essential subunit of the gamma-secretase complex, an endoprotease complex that catalyzes the intramembrane cleavage of integral membrane proteins such as Notch receptors and APP (amyloid-beta precursor protein). The gamma-secretase complex plays a role in Notch and Wnt signaling cascades and regulation of downstream processes via its role in processing key regulatory proteins, and by regulating cytosolic CTNNB1 levels. The sequence is that of Nicastrin (NCSTN) from Homo sapiens (Human).